Consider the following 272-residue polypeptide: 3-methyl-2-oxobutanoate hydroxymethyltransferase (272 aa).

Mg(2+) contacts are provided by Asp-53 and Asp-92. 3-methyl-2-oxobutanoate contacts are provided by residues 53 to 54, Asp-92, and Lys-120; that span reads DS. Glu-122 contacts Mg(2+). Residue Glu-189 is the Proton acceptor of the active site.

The protein belongs to the PanB family. As to quaternary structure, homodecamer; pentamer of dimers. Requires Mg(2+) as cofactor.

Its subcellular location is the cytoplasm. It carries out the reaction 3-methyl-2-oxobutanoate + (6R)-5,10-methylene-5,6,7,8-tetrahydrofolate + H2O = 2-dehydropantoate + (6S)-5,6,7,8-tetrahydrofolate. It participates in cofactor biosynthesis; (R)-pantothenate biosynthesis; (R)-pantoate from 3-methyl-2-oxobutanoate: step 1/2. In terms of biological role, catalyzes the reversible reaction in which hydroxymethyl group from 5,10-methylenetetrahydrofolate is transferred onto alpha-ketoisovalerate to form ketopantoate. The polypeptide is 3-methyl-2-oxobutanoate hydroxymethyltransferase (Ralstonia pickettii (strain 12J)).